Reading from the N-terminus, the 614-residue chain is MVNVSESSPIDDKKARLKHLIQRLPNLPGVYKMLGKNGDILYVGKAKSLKSRVNSYFAKTIDHPKTRALVARIHNIETIITRSETEALLLEQNLIKEYRPPYNVLLRDDKSYLYVFISADKPYPRLAYGRGKGNHQKGRFFGPFPSAHAAKETLVLMQKMFQMRQCTNTFFKQRKRPCLEYQIKRCRAPCVGLVSPEEYSEDVNNTIRFLKGDSSDIHTALIEKMEASAEELDFEKAVFYRDQLSMLREVQAKQAVYTVQGEADVIAIASQGGMTCVNVLTVRGGRVLGGKNYFPDVDSSEPLADNLSAFITSFYFQVTDDLPAEIILSDELPDQLAVSEALATHFGSKVVIKTSVREHRAEWLDLAKLNTNNALKTKLGDYLELHARFGALKDVLTEVTDRTIDRIECFDISHTMGEATIGSCVVFDQGGSRRRDYRQYAIHDIVGGDDYAAMKQVLTRRYKKQPLPDLLLIDGGKGQLGIAKEVLTELGILGDTLLISVAKGEGRKAGLEVLHFIDHEPLDLPMDSKALHLLMHIRDEAHRFAITAHRKKRDKRRSSSVLEVIPGLGEKRRRDLLNHFGGMQQLLGASQQELAGVQGIGPVLAKTVYKVLHE.

Positions 26-104 (NLPGVYKMLG…IKEYRPPYNV (79 aa)) constitute a GIY-YIG domain. Residues 215–250 (SDIHTALIEKMEASAEELDFEKAVFYRDQLSMLREV) enclose the UVR domain.

This sequence belongs to the UvrC family. Interacts with UvrB in an incision complex.

Its subcellular location is the cytoplasm. In terms of biological role, the UvrABC repair system catalyzes the recognition and processing of DNA lesions. UvrC both incises the 5' and 3' sides of the lesion. The N-terminal half is responsible for the 3' incision and the C-terminal half is responsible for the 5' incision. The protein is UvrABC system protein C of Psychrobacter cryohalolentis (strain ATCC BAA-1226 / DSM 17306 / VKM B-2378 / K5).